A 344-amino-acid polypeptide reads, in one-letter code: Probable aldo-keto reductase 1 (344 aa).

The Proton donor role is filled by Y63. H130 lines the substrate pocket. 209–219 (SPLGLGFFAAG) is an NADP(+) binding site.

This sequence belongs to the aldo/keto reductase family.

The polypeptide is Probable aldo-keto reductase 1 (Arabidopsis thaliana (Mouse-ear cress)).